The primary structure comprises 341 residues: Uroporphyrinogen decarboxylase (341 aa).

Substrate-binding positions include 23–27 (RQAGR), D73, Y148, S203, and H318.

It belongs to the uroporphyrinogen decarboxylase family. Homodimer.

It is found in the cytoplasm. The enzyme catalyses uroporphyrinogen III + 4 H(+) = coproporphyrinogen III + 4 CO2. Its pathway is porphyrin-containing compound metabolism; protoporphyrin-IX biosynthesis; coproporphyrinogen-III from 5-aminolevulinate: step 4/4. Catalyzes the decarboxylation of four acetate groups of uroporphyrinogen-III to yield coproporphyrinogen-III. The sequence is that of Uroporphyrinogen decarboxylase from Brucella anthropi (strain ATCC 49188 / DSM 6882 / CCUG 24695 / JCM 21032 / LMG 3331 / NBRC 15819 / NCTC 12168 / Alc 37) (Ochrobactrum anthropi).